A 156-amino-acid polypeptide reads, in one-letter code: MKVIEGVVATPNARVAIAIARFNNFINDSLLQGAIDALKRIGQVADDNITVVWVPGAYELPLTARVLANTGKYDAVIALGTVIRGGTAHFEYVAGEASSGLGSVSLNTEIPVAFGVLTTESIEQAIERAGTKAGNKGAEAALTALEMINVIKAIKA.

Residues Phe22, 57–59, and 81–83 each bind 5-amino-6-(D-ribitylamino)uracil; these read AYE and TVI. 86–87 contacts (2S)-2-hydroxy-3-oxobutyl phosphate; it reads GT. His89 serves as the catalytic Proton donor. Phe114 provides a ligand contact to 5-amino-6-(D-ribitylamino)uracil. A (2S)-2-hydroxy-3-oxobutyl phosphate-binding site is contributed by Arg128.

This sequence belongs to the DMRL synthase family. As to quaternary structure, forms an icosahedral capsid composed of 60 subunits, arranged as a dodecamer of pentamers.

It catalyses the reaction (2S)-2-hydroxy-3-oxobutyl phosphate + 5-amino-6-(D-ribitylamino)uracil = 6,7-dimethyl-8-(1-D-ribityl)lumazine + phosphate + 2 H2O + H(+). It functions in the pathway cofactor biosynthesis; riboflavin biosynthesis; riboflavin from 2-hydroxy-3-oxobutyl phosphate and 5-amino-6-(D-ribitylamino)uracil: step 1/2. In terms of biological role, catalyzes the formation of 6,7-dimethyl-8-ribityllumazine by condensation of 5-amino-6-(D-ribitylamino)uracil with 3,4-dihydroxy-2-butanone 4-phosphate. This is the penultimate step in the biosynthesis of riboflavin. This Serratia proteamaculans (strain 568) protein is 6,7-dimethyl-8-ribityllumazine synthase.